The sequence spans 713 residues: MAAVQGQGQGKLLYIVVVDDDGATFRYTRSLLHSTLQLMGCKPRHAFEISGRVFDEIRGHMGGDMAMGGGGGVQRYELAADAEAASPRQFQFELYKRRTTLLIPRPLFLRLVCHALALYKYVAPDQRSDLHRACRIRERKESVTILLCGTSGCGKSTLSTLLGSRLGITTVVSTDSIRHMMRSFVEEKQNPLLWASTYHAGECLDPVAVADAKARRKAKKRSGISTTSTIDFDKTRPLNDKPDGKPIGKKQMAIEGYKAQSEMVIDSLDRLITAWEDRKESVVVEGVHLSLNFVMGLMRKHPSIIPFMIYISDEGKHTERFAVRAKYMTLDPTKNKYVKYISNIRTIQEYLCSRADKYLVPKVNNTNVDRSVASIHATVFSCLRRRAAGDQLYDPATNTVAVVNEEYKNQCVANSMSSKGMFKLIQRLGSSRKLMAIVNVDGSVSKAWPVESSSGDGKGGSENGSKKYVGDPIYGPLNIGRAESVNLQFGAFGISAWPTDAGCTSQAGSVNESWDNANEGTGSHVPSSSGSPKKLDGHCKEIKESAAASGSDDDEEEEEEAADVPPNSGSEEDLSEEDIRAIHEEMEGSVDEDCNRSDEEYDDLAMRDCMENGFLTDDGVVHTVFDGNGQKHSTLRKRQVNLRTLSKIDLDSPDTARSSSALPISASSKRNGTRRWKRSLSESFRSRPRSAPSLVELTPKHKGSAVPEVAPDK.

Disordered stretches follow at residues 218–249 (AKKR…PIGK), 504–575 (TSQA…EDLS), and 650–713 (LDSP…APDK). Over residues 231 to 246 (DFDKTRPLNDKPDGKP) the composition is skewed to basic and acidic residues. Positions 504 to 531 (TSQAGSVNESWDNANEGTGSHVPSSSGS) are enriched in polar residues. Over residues 533–544 (KKLDGHCKEIKE) the composition is skewed to basic and acidic residues. Residues 551–562 (SDDDEEEEEEAA) show a composition bias toward acidic residues. Positions 656–668 (ARSSSALPISASS) are enriched in low complexity.

Its function is as follows. Required for the accumulation of phytic acid in seeds. Phytic acid is the primary storage form of phosphorus in cereal grains and other plant seeds. The sequence is that of P-loop NTPase domain-containing protein LPA1 homolog from Oryza sativa subsp. japonica (Rice).